We begin with the raw amino-acid sequence, 308 residues long: MKPAFTAGELNTYTSPGDVTAVSRALRHTGRRVMLVPTMGALHDGHLALVRAAKRVPGSVVVVSIFVNPLQFGAGEDLDAYPRTLDDDLALLRSEGVEIAFTPTAAAMYPNGLRTTVQPGPLAAELEGGPRPTHFAGVLTVVCKLLQIVRPDRIFFGEKDYQQLVMIRQMVADLNIDVQVVGVPTVREADGLAMSSRNRYLDATQRELAVTLSAALTAGAHAAHLGGAAALRAARAVLDAVPELTVDYLELRDAGLGPAPAHGSARLLVAARLGNTRLLDNIEMQIETPAGTAGPDGDRQYAQSPWRN.

39-46 (MGALHDGH) is a binding site for ATP. H46 serves as the catalytic Proton donor. (R)-pantoate is bound at residue Q71. Residue Q71 coordinates beta-alanine. An ATP-binding site is contributed by 157 to 160 (GEKD). Q163 serves as a coordination point for (R)-pantoate. Residues V186 and 194 to 197 (MSSR) contribute to the ATP site. The interval 286–308 (IETPAGTAGPDGDRQYAQSPWRN) is disordered.

This sequence belongs to the pantothenate synthetase family. In terms of assembly, homodimer.

It is found in the cytoplasm. The enzyme catalyses (R)-pantoate + beta-alanine + ATP = (R)-pantothenate + AMP + diphosphate + H(+). It participates in cofactor biosynthesis; (R)-pantothenate biosynthesis; (R)-pantothenate from (R)-pantoate and beta-alanine: step 1/1. In terms of biological role, catalyzes the condensation of pantoate with beta-alanine in an ATP-dependent reaction via a pantoyl-adenylate intermediate. This chain is Pantothenate synthetase, found in Mycolicibacterium paratuberculosis (strain ATCC BAA-968 / K-10) (Mycobacterium paratuberculosis).